The following is a 70-amino-acid chain: uncharacterized protein (70 aa).

This is an uncharacterized protein from Enterobacteria phage T4 (Bacteriophage T4).